The sequence spans 342 residues: Protein-glutamate methylesterase/protein-glutamine glutaminase 2 (342 aa).

A Response regulatory domain is found at 2 to 119 (NIGIVNDLPL…GGSADPSQPL (118 aa)). D53 carries the post-translational modification 4-aspartylphosphate. The 194-residue stretch at 144 to 337 (PAPQGALPPL…DQLISLVQRN (194 aa)) folds into the CheB-type methylesterase domain. Residues S159, H186, and D279 contribute to the active site.

It belongs to the CheB family. Post-translationally, phosphorylated by CheA. Phosphorylation of the N-terminal regulatory domain activates the methylesterase activity.

It localises to the cytoplasm. The enzyme catalyses [protein]-L-glutamate 5-O-methyl ester + H2O = L-glutamyl-[protein] + methanol + H(+). It catalyses the reaction L-glutaminyl-[protein] + H2O = L-glutamyl-[protein] + NH4(+). Involved in chemotaxis. Part of a chemotaxis signal transduction system that modulates chemotaxis in response to various stimuli. Catalyzes the demethylation of specific methylglutamate residues introduced into the chemoreceptors (methyl-accepting chemotaxis proteins or MCP) by CheR. Also mediates the irreversible deamidation of specific glutamine residues to glutamic acid. This Burkholderia mallei (strain ATCC 23344) protein is Protein-glutamate methylesterase/protein-glutamine glutaminase 2.